Reading from the N-terminus, the 297-residue chain is N-acetylneuraminate lyase (297 aa).

2 residues coordinate aceneuramate: Ser-47 and Thr-48. Tyr-137 (proton donor) is an active-site residue. Lys-165 serves as the catalytic Schiff-base intermediate with substrate. Residues Thr-167, Gly-189, Asp-191, Glu-192, and Ser-208 each contribute to the aceneuramate site.

This sequence belongs to the DapA family. NanA subfamily. As to quaternary structure, homotetramer.

The protein resides in the cytoplasm. It catalyses the reaction aceneuramate = aldehydo-N-acetyl-D-mannosamine + pyruvate. It participates in amino-sugar metabolism; N-acetylneuraminate degradation; D-fructose 6-phosphate from N-acetylneuraminate: step 1/5. Catalyzes the reversible aldol cleavage of N-acetylneuraminic acid (sialic acid; Neu5Ac) to form pyruvate and N-acetylmannosamine (ManNAc) via a Schiff base intermediate. This is N-acetylneuraminate lyase from Salmonella agona (strain SL483).